Consider the following 178-residue polypeptide: Large ribosomal subunit protein uL6 (178 aa).

Belongs to the universal ribosomal protein uL6 family. In terms of assembly, part of the 50S ribosomal subunit.

This protein binds to the 23S rRNA, and is important in its secondary structure. It is located near the subunit interface in the base of the L7/L12 stalk, and near the tRNA binding site of the peptidyltransferase center. The protein is Large ribosomal subunit protein uL6 of Corynebacterium jeikeium (strain K411).